We begin with the raw amino-acid sequence, 23 residues long: Aurein-4.3 (23 aa).

This sequence belongs to the frog skin active peptide (FSAP) family. Aurein subfamily. Expressed by the skin dorsal glands.

Its subcellular location is the secreted. In terms of biological role, has no antimicrobial or anticancer activity. This is Aurein-4.3 from Ranoidea aurea (Green and golden bell frog).